A 364-amino-acid polypeptide reads, in one-letter code: Chorismate synthase (364 aa).

Arg47 is an NADP(+) binding site. FMN contacts are provided by residues 124 to 126 (RAS), Gly287, 302 to 306 (KPTAT), and Arg328.

Belongs to the chorismate synthase family. In terms of assembly, homotetramer. The cofactor is FMNH2.

The enzyme catalyses 5-O-(1-carboxyvinyl)-3-phosphoshikimate = chorismate + phosphate. Its pathway is metabolic intermediate biosynthesis; chorismate biosynthesis; chorismate from D-erythrose 4-phosphate and phosphoenolpyruvate: step 7/7. Catalyzes the anti-1,4-elimination of the C-3 phosphate and the C-6 proR hydrogen from 5-enolpyruvylshikimate-3-phosphate (EPSP) to yield chorismate, which is the branch point compound that serves as the starting substrate for the three terminal pathways of aromatic amino acid biosynthesis. This reaction introduces a second double bond into the aromatic ring system. The polypeptide is Chorismate synthase (Prochlorococcus marinus subsp. pastoris (strain CCMP1986 / NIES-2087 / MED4)).